The chain runs to 333 residues: Flap endonuclease 1 (333 aa).

The segment at 1–99 (MGVAIRDILA…ETINERREHR (99 aa)) is N-domain. 7 residues coordinate Mg(2+): aspartate 28, aspartate 81, glutamate 153, glutamate 155, aspartate 174, aspartate 176, and aspartate 235. The segment at 117-255 (EAYKQASASA…KTALKIVRNG (139 aa)) is I-domain. Positions 325-333 (TQKTLDAWF) are interaction with PCNA.

This sequence belongs to the XPG/RAD2 endonuclease family. FEN1 subfamily. Interacts with PCNA. PCNA stimulates the nuclease activity without altering cleavage specificity. Mg(2+) is required as a cofactor.

In terms of biological role, structure-specific nuclease with 5'-flap endonuclease and 5'-3' exonuclease activities involved in DNA replication and repair. During DNA replication, cleaves the 5'-overhanging flap structure that is generated by displacement synthesis when DNA polymerase encounters the 5'-end of a downstream Okazaki fragment. Binds the unpaired 3'-DNA end and kinks the DNA to facilitate 5' cleavage specificity. Cleaves one nucleotide into the double-stranded DNA from the junction in flap DNA, leaving a nick for ligation. Also involved in the base excision repair (BER) pathway. Acts as a genome stabilization factor that prevents flaps from equilibrating into structures that lead to duplications and deletions. Also possesses 5'-3' exonuclease activity on nicked or gapped double-stranded DNA. In Methanoculleus marisnigri (strain ATCC 35101 / DSM 1498 / JR1), this protein is Flap endonuclease 1.